A 136-amino-acid polypeptide reads, in one-letter code: Ribosome-binding factor A (136 aa).

Belongs to the RbfA family. As to quaternary structure, monomer. Binds 30S ribosomal subunits, but not 50S ribosomal subunits or 70S ribosomes.

It localises to the cytoplasm. Its function is as follows. One of several proteins that assist in the late maturation steps of the functional core of the 30S ribosomal subunit. Associates with free 30S ribosomal subunits (but not with 30S subunits that are part of 70S ribosomes or polysomes). Required for efficient processing of 16S rRNA. May interact with the 5'-terminal helix region of 16S rRNA. This chain is Ribosome-binding factor A, found in Yersinia pestis bv. Antiqua (strain Antiqua).